The primary structure comprises 396 residues: Elongation factor Tu (396 aa).

Positions 10–206 (KPHVNVGTIG…ALDSYIPEPV (197 aa)) constitute a tr-type G domain. Residues 19–26 (GHIDHGKT) are G1. 19 to 26 (GHIDHGKT) is a binding site for GTP. Thr-26 provides a ligand contact to Mg(2+). Residues 60 to 64 (TKTVT) form a G2 region. The G3 stretch occupies residues 83 to 86 (DCPG). GTP-binding positions include 83 to 87 (DCPGH) and 138 to 141 (NKCD). Positions 138 to 141 (NKCD) are G4. Residues 176–178 (ASL) are G5.

The protein belongs to the TRAFAC class translation factor GTPase superfamily. Classic translation factor GTPase family. EF-Tu/EF-1A subfamily. As to quaternary structure, monomer.

The protein localises to the cytoplasm. It catalyses the reaction GTP + H2O = GDP + phosphate + H(+). GTP hydrolase that promotes the GTP-dependent binding of aminoacyl-tRNA to the A-site of ribosomes during protein biosynthesis. The protein is Elongation factor Tu of Sorangium cellulosum (strain So ce56) (Polyangium cellulosum (strain So ce56)).